Reading from the N-terminus, the 491-residue chain is Anthranilate synthase component 1 (491 aa).

L-tryptophan-binding positions include Ser49 and 271–273 (PYL). 306–307 (GT) provides a ligand contact to chorismate. A Mg(2+)-binding site is contributed by Glu333. Chorismate contacts are provided by residues Tyr421, Arg441, 455 to 457 (GAG), and Gly457. Glu470 serves as a coordination point for Mg(2+).

Belongs to the anthranilate synthase component I family. In terms of assembly, heterotetramer consisting of two non-identical subunits: a beta subunit (TrpG) and a large alpha subunit (TrpE). The cofactor is Mg(2+).

The catalysed reaction is chorismate + L-glutamine = anthranilate + pyruvate + L-glutamate + H(+). It functions in the pathway amino-acid biosynthesis; L-tryptophan biosynthesis; L-tryptophan from chorismate: step 1/5. Its activity is regulated as follows. Feedback inhibited by tryptophan. Part of a heterotetrameric complex that catalyzes the two-step biosynthesis of anthranilate, an intermediate in the biosynthesis of L-tryptophan. In the first step, the glutamine-binding beta subunit (TrpG) of anthranilate synthase (AS) provides the glutamine amidotransferase activity which generates ammonia as a substrate that, along with chorismate, is used in the second step, catalyzed by the large alpha subunit of AS (TrpE) to produce anthranilate. In the absence of TrpG, TrpE can synthesize anthranilate directly from chorismate and high concentrations of ammonia. This is Anthranilate synthase component 1 (trpE) from Neisseria meningitidis serogroup B (strain ATCC BAA-335 / MC58).